Reading from the N-terminus, the 203-residue chain is Small ribosomal subunit protein uS4 (203 aa).

An S4 RNA-binding domain is found at 92–164 (TRLDSVVYLL…LEENRIRNVP (73 aa)).

Belongs to the universal ribosomal protein uS4 family. In terms of assembly, part of the 30S ribosomal subunit. Contacts protein S5. The interaction surface between S4 and S5 is involved in control of translational fidelity.

Its function is as follows. One of the primary rRNA binding proteins, it binds directly to 16S rRNA where it nucleates assembly of the body of the 30S subunit. With S5 and S12 plays an important role in translational accuracy. This Opitutus terrae (strain DSM 11246 / JCM 15787 / PB90-1) protein is Small ribosomal subunit protein uS4.